The chain runs to 318 residues: Ribosomal RNA small subunit methyltransferase H (318 aa).

S-adenosyl-L-methionine-binding positions include 38 to 40 (AGH), D57, L91, D105, and Q112.

This sequence belongs to the methyltransferase superfamily. RsmH family.

It localises to the cytoplasm. The enzyme catalyses cytidine(1402) in 16S rRNA + S-adenosyl-L-methionine = N(4)-methylcytidine(1402) in 16S rRNA + S-adenosyl-L-homocysteine + H(+). In terms of biological role, specifically methylates the N4 position of cytidine in position 1402 (C1402) of 16S rRNA. The chain is Ribosomal RNA small subunit methyltransferase H from Clavibacter michiganensis subsp. michiganensis (strain NCPPB 382).